Consider the following 242-residue polypeptide: 2-C-methyl-D-erythritol 4-phosphate cytidylyltransferase (242 aa).

This sequence belongs to the IspD/TarI cytidylyltransferase family. IspD subfamily.

The enzyme catalyses 2-C-methyl-D-erythritol 4-phosphate + CTP + H(+) = 4-CDP-2-C-methyl-D-erythritol + diphosphate. The protein operates within isoprenoid biosynthesis; isopentenyl diphosphate biosynthesis via DXP pathway; isopentenyl diphosphate from 1-deoxy-D-xylulose 5-phosphate: step 2/6. Functionally, catalyzes the formation of 4-diphosphocytidyl-2-C-methyl-D-erythritol from CTP and 2-C-methyl-D-erythritol 4-phosphate (MEP). This Halorhodospira halophila (strain DSM 244 / SL1) (Ectothiorhodospira halophila (strain DSM 244 / SL1)) protein is 2-C-methyl-D-erythritol 4-phosphate cytidylyltransferase.